We begin with the raw amino-acid sequence, 236 residues long: Ribosome assembly factor MRT4 (236 aa).

This sequence belongs to the universal ribosomal protein uL10 family. As to quaternary structure, associates with the pre-60S ribosomal particle.

It localises to the nucleus. Its subcellular location is the nucleolus. The protein resides in the cytoplasm. Its function is as follows. Component of the ribosome assembly machinery. Nuclear paralog of the ribosomal protein P0, it binds pre-60S subunits at an early stage of assembly in the nucleolus, and is replaced by P0 in cytoplasmic pre-60S subunits and mature 80S ribosomes. This chain is Ribosome assembly factor MRT4, found in Saccharomyces cerevisiae (strain ATCC 204508 / S288c) (Baker's yeast).